The following is a 535-amino-acid chain: MGSGGPLLLLRGLLLVGAAYCAAPRPPRHSSRPNVLLVACDSFDGRLTFYPGNQTVDLPFINFMKRHGSVFLNAYTNSPICCPSRAAMWSGLFTHLTESWNNFKGLDPDYVTWMDLMQKHGYYTQKYGKLDYTSGHHSVSNRVEAWTRDVEFLLRQEGRPKVNLTGDRRHVRVMKTDWQVTDKAVTWIKKEAVNLTQPFALYLGLNLPHPYPSPYAGENFGSSTFLTSPYWLEKVKYEAIKIPTWTALSEMHPVDYYSSYTKNCTGEFTKQEVRRIRAFYYAMCAETDAMLGEIISALQDTDLLKKTIIMFTSDHGELAMEHRQFYKMSMYEGSSHVPLLVMGPGIRKQQQVSAVVSLVDIYPTMLDLARIPVLQNLSGYSLLPLLLEKAEDEVPRRGPRPSWVLSEFHGCNVNASTYMLRTDQWKYITYSDGVSVPPQLFDLSADPDELTNVAIKFPETVQSLDKILRSIVNYPKVSSTVQNYNKKQFISWKQSLGQNYSNVIANLRWHQDWLKEPKKYEDAIDRWLSQREQRK.

The signal sequence occupies residues 1 to 21 (MGSGGPLLLLRGLLLVGAAYC). Ca(2+) is bound by residues Asp-41 and Cys-81. Residue Cys-81 is the Nucleophile of the active site. Cys-81 carries the post-translational modification 3-oxoalanine (Cys). Lys-129 provides a ligand contact to substrate. An N-linked (GlcNAc...) asparagine glycan is attached at Asn-194. Substrate is bound at residue His-252. A glycan (N-linked (GlcNAc...) asparagine) is linked at Asn-263. Residues Asp-314 and His-315 each coordinate Ca(2+). 3 N-linked (GlcNAc...) asparagine glycosylation sites follow: Asn-376, Asn-414, and Asn-499.

It belongs to the sulfatase family. It depends on Ca(2+) as a cofactor. The conversion to 3-oxoalanine (also known as C-formylglycine, FGly), of a serine or cysteine residue in prokaryotes and of a cysteine residue in eukaryotes, is critical for catalytic activity.

It localises to the secreted. It is found in the lysosome. The catalysed reaction is an aryl sulfate + H2O = a phenol + sulfate + H(+). The enzyme catalyses Hydrolysis of the 2-sulfate groups of the 2-O-sulfo-D-glucuronate residues of chondroitin sulfate, heparin and heparitin sulfate.. Its function is as follows. Catalyzes the hydrolysis of pseudosubstrates such as p-nitrocatechol sulfate and p-nitrophenyl sulfate. Catalyzes the hydrolysis of the 2-sulfate groups of the 2-O-sulfo-D-glucuronate residues of chondroitin sulfate, heparin and heparitin sulfate. Acts selectively on 2-sulfoglucuronate and lacks activity against 2-sulfoiduronate. This chain is Arylsulfatase K (ARSK), found in Gallus gallus (Chicken).